The primary structure comprises 97 residues: Alpha-latrotoxin associated low molecular weight protein 2 (97 aa).

An N-terminal signal peptide occupies residues 1 to 19; the sequence is MFKLICIVFIATILSITSA. 3 disulfide bridges follow: Cys-36–Cys-72, Cys-52–Cys-68, and Cys-55–Cys-81.

The protein belongs to the arthropod CHH/MIH/GIH/VIH hormone family. As to expression, expressed by the venom gland.

The protein resides in the secreted. Its function is as follows. May increase the toxicity of alpha-latrotoxin and/or other venom components. Is non-toxic to mice and to the cockroach Periplaneta americana. In Steatoda grossa (False black widow), this protein is Alpha-latrotoxin associated low molecular weight protein 2.